Here is a 106-residue protein sequence, read N- to C-terminus: MPRKTSHEHDHGLVVETSKPEVAPPPRYQVLLLNDDYTPMDFVVTVLQQFFNLELERATQVMLHVHTRGRGVCGVYSREVAESKVAQVNEFSRMNQHPLLCTMEQA.

Residues 1-13 show a composition bias toward basic and acidic residues; sequence MPRKTSHEHDHGL. Residues 1-21 form a disordered region; that stretch reads MPRKTSHEHDHGLVVETSKPE.

The protein belongs to the ClpS family. As to quaternary structure, binds to the N-terminal domain of the chaperone ClpA.

Involved in the modulation of the specificity of the ClpAP-mediated ATP-dependent protein degradation. This is ATP-dependent Clp protease adapter protein ClpS from Xanthomonas campestris pv. campestris (strain 8004).